The primary structure comprises 417 residues: Magnesium-protoporphyrin IX monomethyl ester [oxidative] cyclase, chloroplastic (417 aa).

The N-terminal 45 residues, 1–45, are a transit peptide targeting the chloroplast; sequence MASAMELSLLNPAMHHYGIAAKTASHLPVVPARRASSGAVRFRVR.

The protein belongs to the AcsF family. Requires Fe cation as cofactor.

It is found in the plastid. It localises to the chloroplast membrane. It carries out the reaction Mg-protoporphyrin IX 13-monomethyl ester + 3 NADPH + 3 O2 + 2 H(+) = 3,8-divinyl protochlorophyllide a + 3 NADP(+) + 5 H2O. The protein operates within porphyrin-containing compound metabolism; chlorophyll biosynthesis. Functionally, catalyzes the formation of the isocyclic ring in chlorophyll biosynthesis. Mediates the cyclase reaction, which results in the formation of divinylprotochlorophyllide (Pchlide) characteristic of all chlorophylls from magnesium-protoporphyrin IX 13-monomethyl ester (MgPMME). This is Magnesium-protoporphyrin IX monomethyl ester [oxidative] cyclase, chloroplastic (CRD1) from Hordeum vulgare (Barley).